A 327-amino-acid chain; its full sequence is Gonadotropin-releasing hormone receptor (327 aa).

Residues 1-37 (MASASPEQNQNHCSAVNNSNMLMQGNLPTLTLSGKIR) lie on the Extracellular side of the membrane. N-linked (GlcNAc...) asparagine glycosylation is present at Asn17. The chain crosses the membrane as a helical span at residues 38 to 57 (VTVTFFLFLLSTIFNASFLL). Residues 58-76 (KLQKWTQKKEKGKKLSRMK) are Cytoplasmic-facing. Residues 77–96 (VLLKHLTLANLLETLIVMPL) form a helical membrane-spanning segment. Residues 97–114 (DGMWNITVQWYAGEFLCK) lie on the Extracellular side of the membrane. Asn101 carries an N-linked (GlcNAc...) asparagine glycan. Residues Cys113 and Cys195 are joined by a disulfide bond. A helical membrane pass occupies residues 115–136 (VLSYLKLFSMYAPAFMMVVISL). The Cytoplasmic portion of the chain corresponds to 137–163 (DRSLAITRPLAMKNNGKLGQSMIGLAW). The helical transmembrane segment at 164–183 (LLSGIFAGPQLYIFRMIHLA) threads the bilayer. Residues 184 to 211 (DSSGQTEGFPQCVTHCSFPQWWHQAFYN) are Extracellular-facing. A helical membrane pass occupies residues 212–231 (FFTFSCLFIIPLFITLICNA). The Cytoplasmic segment spans residues 232–280 (KIIFTLTRVLHQDPHELQLNQSKNNIPRARLRTLKMTVAFATSFTVCWT). The chain crosses the membrane as a helical span at residues 281–299 (PYYVLGIWYWFDPEMLNRV). Topologically, residues 300–305 (SDPVNH) are extracellular. A helical membrane pass occupies residues 306–325 (FFFLFALLNPCFDPLIYGYF). Over 326 to 327 (SL) the chain is Cytoplasmic.

It belongs to the G-protein coupled receptor 1 family.

The protein resides in the cell membrane. In terms of biological role, receptor for gonadotropin releasing hormone (GnRH) that mediates the action of GnRH to stimulate the secretion of the gonadotropic hormones luteinizing hormone (LH) and follicle-stimulating hormone (FSH). This receptor mediates its action by association with G-proteins that activate a phosphatidylinositol-calcium second messenger system. In Canis lupus familiaris (Dog), this protein is Gonadotropin-releasing hormone receptor (GNRHR).